A 428-amino-acid chain; its full sequence is Adenylosuccinate synthetase (428 aa).

Residues 12–18 and 40–42 each bind GTP; these read GDEGKGK and GHT. The Proton acceptor role is filled by Asp13. Residues Asp13 and Gly40 each coordinate Mg(2+). IMP contacts are provided by residues 13-16, 38-41, Thr130, Arg144, Gln225, Thr240, and Arg304; these read DEGK and NAGH. Residue His41 is the Proton donor of the active site. 300-306 is a substrate binding site; the sequence is VTTGRAR. GTP contacts are provided by residues Arg306, 332–334, and 414–416; these read KID and SVG.

It belongs to the adenylosuccinate synthetase family. As to quaternary structure, homodimer. Mg(2+) serves as cofactor.

It is found in the cytoplasm. The enzyme catalyses IMP + L-aspartate + GTP = N(6)-(1,2-dicarboxyethyl)-AMP + GDP + phosphate + 2 H(+). It functions in the pathway purine metabolism; AMP biosynthesis via de novo pathway; AMP from IMP: step 1/2. In terms of biological role, plays an important role in the de novo pathway of purine nucleotide biosynthesis. Catalyzes the first committed step in the biosynthesis of AMP from IMP. The chain is Adenylosuccinate synthetase from Clostridium acetobutylicum (strain ATCC 824 / DSM 792 / JCM 1419 / IAM 19013 / LMG 5710 / NBRC 13948 / NRRL B-527 / VKM B-1787 / 2291 / W).